We begin with the raw amino-acid sequence, 481 residues long: Ribulose bisphosphate carboxylase large chain (481 aa).

Positions 1–2 (MS) are excised as a propeptide. Position 3 is an N-acetylproline (proline 3). At lysine 14 the chain carries N6,N6,N6-trimethyllysine. The substrate site is built by asparagine 123 and threonine 173. Catalysis depends on lysine 175, which acts as the Proton acceptor. Lysine 177 contributes to the substrate binding site. 3 residues coordinate Mg(2+): lysine 201, aspartate 203, and glutamate 204. Lysine 201 is modified (N6-carboxylysine). Residue histidine 294 is the Proton acceptor of the active site. Residues arginine 295, histidine 327, and serine 379 each contribute to the substrate site.

It belongs to the RuBisCO large chain family. Type I subfamily. As to quaternary structure, heterohexadecamer of 8 large chains and 8 small chains; disulfide-linked. The disulfide link is formed within the large subunit homodimers. Mg(2+) serves as cofactor. The disulfide bond which can form in the large chain dimeric partners within the hexadecamer appears to be associated with oxidative stress and protein turnover.

It is found in the plastid. It carries out the reaction 2 (2R)-3-phosphoglycerate + 2 H(+) = D-ribulose 1,5-bisphosphate + CO2 + H2O. It catalyses the reaction D-ribulose 1,5-bisphosphate + O2 = 2-phosphoglycolate + (2R)-3-phosphoglycerate + 2 H(+). RuBisCO catalyzes two reactions: the carboxylation of D-ribulose 1,5-bisphosphate, the primary event in carbon dioxide fixation, as well as the oxidative fragmentation of the pentose substrate in the photorespiration process. Both reactions occur simultaneously and in competition at the same active site. The chain is Ribulose bisphosphate carboxylase large chain from Cuscuta gronovii (Common dodder).